Consider the following 127-residue polypeptide: Large ribosomal subunit protein bL17 (127 aa).

This sequence belongs to the bacterial ribosomal protein bL17 family. Part of the 50S ribosomal subunit. Contacts protein L32.

This Enterococcus faecalis (strain ATCC 700802 / V583) protein is Large ribosomal subunit protein bL17.